The chain runs to 251 residues: Octanoyltransferase (251 aa).

Residues 56 to 237 (ADTGDEIWVV…RLIANLDGES (182 aa)) form the BPL/LPL catalytic domain. Substrate contacts are provided by residues 96–103 (RGGQITYH), 168–170 (ALG), and 181–183 (GLS). C199 serves as the catalytic Acyl-thioester intermediate.

Belongs to the LipB family.

It is found in the cytoplasm. The catalysed reaction is octanoyl-[ACP] + L-lysyl-[protein] = N(6)-octanoyl-L-lysyl-[protein] + holo-[ACP] + H(+). Its pathway is protein modification; protein lipoylation via endogenous pathway; protein N(6)-(lipoyl)lysine from octanoyl-[acyl-carrier-protein]: step 1/2. Catalyzes the transfer of endogenously produced octanoic acid from octanoyl-acyl-carrier-protein onto the lipoyl domains of lipoate-dependent enzymes. Lipoyl-ACP can also act as a substrate although octanoyl-ACP is likely to be the physiological substrate. The chain is Octanoyltransferase from Burkholderia ambifaria (strain MC40-6).